Reading from the N-terminus, the 462-residue chain is MALTRLLLPISILWFCFYSSHTILQKDPLLICVNGDPGFDQRAYPTYFGPILDEFSSIMGFEPSILSLERFNPVGGPETSPDTDISVDDFGARGDGTDDTKAFEKAWKDACSSGSVLIVPENKNYLLKQITFSGPCKSDLRVKIRGTIEASSDQSDWVGHNRKRWIEFEDISNLTLEGGGTSNGNGETWWDSSCKRKKSLPCKSAPTALTFRSCKNLIVSDLSIKDSQKMHLSFDKCQDVIASNLMVTAPEHSPNTDGIHITGTQRIHVMNSVIGTGDDCISIESGSKMVIATNITCGPGHGISIGSLGDRNSEAHVSGVLVDGGNLFDTTNGLRIKTWQGGSGSAKNIKFQNIVMHNVTNPIIIDQYYCDSKDPCPEQESAVKVSNVAYMNIRGTSASEVAVKFDCSKSSPCQGYIVGNINLVGNGGKETTMSCSNIVQGLLREGLSTFLFMKRRVHECSY.

The signal sequence occupies residues 1–22 (MALTRLLLPISILWFCFYSSHT). The N-linked (GlcNAc...) asparagine glycan is linked to Asn-173. Residue Asp-278 is the Proton donor of the active site. Cys-280 and Cys-297 are oxidised to a cystine. Asn-294 is a glycosylation site (N-linked (GlcNAc...) asparagine). The active site involves His-301. An N-linked (GlcNAc...) asparagine glycan is attached at Asn-358. 2 cysteine pairs are disulfide-bonded: Cys-407/Cys-413 and Cys-435/Cys-460.

It belongs to the glycosyl hydrolase 28 family.

It localises to the secreted. The protein resides in the cell wall. It catalyses the reaction (1,4-alpha-D-galacturonosyl)n+m + H2O = (1,4-alpha-D-galacturonosyl)n + (1,4-alpha-D-galacturonosyl)m.. Functionally, acts in concert with the pectinesterase, in the ripening process. Is involved in cell wall metabolism, specifically in polyuronide degradation. This is Polygalacturonase from Persea americana (Avocado).